The sequence spans 253 residues: Imidazole glycerol phosphate synthase subunit HisF (253 aa).

Residues D11 and D130 contribute to the active site.

The protein belongs to the HisA/HisF family. In terms of assembly, heterodimer of HisH and HisF.

It is found in the cytoplasm. It catalyses the reaction 5-[(5-phospho-1-deoxy-D-ribulos-1-ylimino)methylamino]-1-(5-phospho-beta-D-ribosyl)imidazole-4-carboxamide + L-glutamine = D-erythro-1-(imidazol-4-yl)glycerol 3-phosphate + 5-amino-1-(5-phospho-beta-D-ribosyl)imidazole-4-carboxamide + L-glutamate + H(+). The protein operates within amino-acid biosynthesis; L-histidine biosynthesis; L-histidine from 5-phospho-alpha-D-ribose 1-diphosphate: step 5/9. Its function is as follows. IGPS catalyzes the conversion of PRFAR and glutamine to IGP, AICAR and glutamate. The HisF subunit catalyzes the cyclization activity that produces IGP and AICAR from PRFAR using the ammonia provided by the HisH subunit. The protein is Imidazole glycerol phosphate synthase subunit HisF of Thermotoga sp. (strain RQ2).